A 474-amino-acid polypeptide reads, in one-letter code: ATP synthase subunit beta 2 (474 aa).

156 to 163 (GGAGVGKT) contacts ATP.

The protein belongs to the ATPase alpha/beta chains family. F-type ATPases have 2 components, CF(1) - the catalytic core - and CF(0) - the membrane proton channel. CF(1) has five subunits: alpha(3), beta(3), gamma(1), delta(1), epsilon(1). CF(0) has three main subunits: a(1), b(2) and c(9-12). The alpha and beta chains form an alternating ring which encloses part of the gamma chain. CF(1) is attached to CF(0) by a central stalk formed by the gamma and epsilon chains, while a peripheral stalk is formed by the delta and b chains.

The protein localises to the cell inner membrane. It carries out the reaction ATP + H2O + 4 H(+)(in) = ADP + phosphate + 5 H(+)(out). Functionally, produces ATP from ADP in the presence of a proton gradient across the membrane. The catalytic sites are hosted primarily by the beta subunits. The polypeptide is ATP synthase subunit beta 2 (Shewanella frigidimarina (strain NCIMB 400)).